We begin with the raw amino-acid sequence, 184 residues long: Large ribosomal subunit protein uL6 (184 aa).

Belongs to the universal ribosomal protein uL6 family. As to quaternary structure, part of the 50S ribosomal subunit.

This protein binds to the 23S rRNA, and is important in its secondary structure. It is located near the subunit interface in the base of the L7/L12 stalk, and near the tRNA binding site of the peptidyltransferase center. The chain is Large ribosomal subunit protein uL6 from Thermotoga petrophila (strain ATCC BAA-488 / DSM 13995 / JCM 10881 / RKU-1).